Reading from the N-terminus, the 458-residue chain is Phosphoglucosamine mutase (458 aa).

Ser-106 (phosphoserine intermediate) is an active-site residue. Residues Ser-106, Asp-247, Asp-249, and Asp-251 each coordinate Mg(2+). At Ser-106 the chain carries Phosphoserine.

It belongs to the phosphohexose mutase family. It depends on Mg(2+) as a cofactor. In terms of processing, activated by phosphorylation.

The catalysed reaction is alpha-D-glucosamine 1-phosphate = D-glucosamine 6-phosphate. In terms of biological role, catalyzes the conversion of glucosamine-6-phosphate to glucosamine-1-phosphate. The polypeptide is Phosphoglucosamine mutase (Chlamydia pneumoniae (Chlamydophila pneumoniae)).